Reading from the N-terminus, the 394-residue chain is Na(+)/H(+) antiporter NhaA (394 aa).

A run of 11 helical transmembrane segments spans residues 14 to 34 (AGGL…NSAL), 59 to 79 (LLLW…GLEV), 95 to 115 (VFPA…YLLF), 125 to 145 (GWAI…ALLG), 154 to 174 (VFLL…IALF), 179 to 199 (VSLQ…YMNW), 213 to 233 (LVLW…GVIV), 254 to 274 (GLHP…NAGV), 292 to 312 (IATG…WLAV), 328 to 348 (IFAV…IASL), and 363 to 383 (LGIL…LRLV).

It belongs to the NhaA Na(+)/H(+) (TC 2.A.33) antiporter family.

It is found in the cell inner membrane. It catalyses the reaction Na(+)(in) + 2 H(+)(out) = Na(+)(out) + 2 H(+)(in). In terms of biological role, na(+)/H(+) antiporter that extrudes sodium in exchange for external protons. The polypeptide is Na(+)/H(+) antiporter NhaA (Yersinia pseudotuberculosis serotype O:1b (strain IP 31758)).